Reading from the N-terminus, the 307-residue chain is Ribosomal RNA small subunit methyltransferase H (307 aa).

S-adenosyl-L-methionine is bound by residues 32 to 34 (GGH), Asp-52, Phe-78, Asp-99, and Gln-106.

The protein belongs to the methyltransferase superfamily. RsmH family.

It is found in the cytoplasm. It carries out the reaction cytidine(1402) in 16S rRNA + S-adenosyl-L-methionine = N(4)-methylcytidine(1402) in 16S rRNA + S-adenosyl-L-homocysteine + H(+). Its function is as follows. Specifically methylates the N4 position of cytidine in position 1402 (C1402) of 16S rRNA. This Caldicellulosiruptor saccharolyticus (strain ATCC 43494 / DSM 8903 / Tp8T 6331) protein is Ribosomal RNA small subunit methyltransferase H.